The following is a 266-amino-acid chain: 4-hydroxy-tetrahydrodipicolinate reductase (266 aa).

NAD(+) is bound at residue 11–16 (GALGKM). An NADP(+)-binding site is contributed by lysine 39. 100–102 (GTT) is an NAD(+) binding site. Histidine 156 serves as the catalytic Proton donor/acceptor. Position 157 (histidine 157) interacts with (S)-2,3,4,5-tetrahydrodipicolinate. The active-site Proton donor is lysine 160. (S)-2,3,4,5-tetrahydrodipicolinate is bound at residue 166-167 (GT).

It belongs to the DapB family.

Its subcellular location is the cytoplasm. The catalysed reaction is (S)-2,3,4,5-tetrahydrodipicolinate + NAD(+) + H2O = (2S,4S)-4-hydroxy-2,3,4,5-tetrahydrodipicolinate + NADH + H(+). The enzyme catalyses (S)-2,3,4,5-tetrahydrodipicolinate + NADP(+) + H2O = (2S,4S)-4-hydroxy-2,3,4,5-tetrahydrodipicolinate + NADPH + H(+). Its pathway is amino-acid biosynthesis; L-lysine biosynthesis via DAP pathway; (S)-tetrahydrodipicolinate from L-aspartate: step 4/4. In terms of biological role, catalyzes the conversion of 4-hydroxy-tetrahydrodipicolinate (HTPA) to tetrahydrodipicolinate. This is 4-hydroxy-tetrahydrodipicolinate reductase from Syntrophomonas wolfei subsp. wolfei (strain DSM 2245B / Goettingen).